A 229-amino-acid polypeptide reads, in one-letter code: Enolase-phosphatase E1 (229 aa).

The tract at residues 207 to 229 (RDPASHHPQVQRFDDIHPEQIPA) is disordered. The span at 218–229 (RFDDIHPEQIPA) shows a compositional bias: basic and acidic residues.

Belongs to the HAD-like hydrolase superfamily. MasA/MtnC family. Monomer. Requires Mg(2+) as cofactor.

It catalyses the reaction 5-methylsulfanyl-2,3-dioxopentyl phosphate + H2O = 1,2-dihydroxy-5-(methylsulfanyl)pent-1-en-3-one + phosphate. The protein operates within amino-acid biosynthesis; L-methionine biosynthesis via salvage pathway; L-methionine from S-methyl-5-thio-alpha-D-ribose 1-phosphate: step 3/6. Its pathway is amino-acid biosynthesis; L-methionine biosynthesis via salvage pathway; L-methionine from S-methyl-5-thio-alpha-D-ribose 1-phosphate: step 4/6. In terms of biological role, bifunctional enzyme that catalyzes the enolization of 2,3-diketo-5-methylthiopentyl-1-phosphate (DK-MTP-1-P) into the intermediate 2-hydroxy-3-keto-5-methylthiopentenyl-1-phosphate (HK-MTPenyl-1-P), which is then dephosphorylated to form the acireductone 1,2-dihydroxy-3-keto-5-methylthiopentene (DHK-MTPene). This Klebsiella pneumoniae subsp. pneumoniae (strain ATCC 700721 / MGH 78578) protein is Enolase-phosphatase E1.